The primary structure comprises 476 residues: Cysteine--tRNA ligase (476 aa).

Cys36 is a binding site for Zn(2+). A 'HIGH' region motif is present at residues 38–48 (PTVYDYAHIGN). Residues Cys221, His246, and Glu250 each contribute to the Zn(2+) site. Positions 278 to 282 (KMSKS) match the 'KMSKS' region motif. Lys281 is an ATP binding site.

Belongs to the class-I aminoacyl-tRNA synthetase family. As to quaternary structure, monomer. The cofactor is Zn(2+).

It is found in the cytoplasm. It carries out the reaction tRNA(Cys) + L-cysteine + ATP = L-cysteinyl-tRNA(Cys) + AMP + diphosphate. This Chlamydia felis (strain Fe/C-56) (Chlamydophila felis) protein is Cysteine--tRNA ligase.